The primary structure comprises 587 residues: MAARDDAGARKAQHDAEIHDLRSQVSMLEEEVSVLRRKLAESPRQIRVLEDRLHETQAKLAAVTGQNERLVATLKEAREQIIALKEEVDRLAQPPSGFGVFLGAREDGTVDIFTGGRKLRVNVSPSVDVSQLKQGQEVLLNEALNVVEALGYETQGEVVMLKELFDDGERALVIAHADEERVIKLAEPLRGVPLRAGDSLMLEPRSGYAYEKIHKAEVEELVLEEVPDITYEEIGGLGPQIEQIRDAVELPYLHADLFREHKLRPPKGVLLYGPPGCGKTLIAKAVANSLAKQVAEKTGQEGKSFFLNIKGPELLNKYVGETERHIRLVFQRAREKASAGTPVIVFFDEMDSIFRTRGSGVSSDVENTIVPQLLSEIDGVEGLENVIVIGASNREDMIDPAILRPGRLDVKIKIERPDAEAAKDIFSKYLVPGLPLHPDDLAEHGGSEEATIEAMIQRVVERMYAETEENRFLEVTYANGDKEVLYFKDFNSGAMIQNIVDRAKKMAIKQYLETGQKGLRVSHLLAACVDEFSENEDLPNTTNPDDWARISGKKGERIVYIRTLVSGKAGSEAGRSIDTVANTGQYL.

Residues 9–94 are a coiled coil; it reads ARKAQHDAEI…KEEVDRLAQP (86 aa). ATP is bound at residue 276-281; sequence GCGKTL. Residues 586–587 form a docks into pockets in the proteasome alpha-ring region; that stretch reads YL.

It belongs to the AAA ATPase family. Homohexamer. Assembles into a hexameric ring structure that caps the 20S proteasome core. Strongly interacts with the prokaryotic ubiquitin-like protein Pup through a hydrophobic interface; the interacting region of ARC lies in its N-terminal coiled-coil domain. There is one Pup binding site per ARC hexamer ring. Upon ATP-binding, the C-terminus of ARC interacts with the alpha-rings of the proteasome core, possibly by binding to the intersubunit pockets.

It participates in protein degradation; proteasomal Pup-dependent pathway. In terms of biological role, ATPase which is responsible for recognizing, binding, unfolding and translocation of pupylated proteins into the bacterial 20S proteasome core particle. May be essential for opening the gate of the 20S proteasome via an interaction with its C-terminus, thereby allowing substrate entry and access to the site of proteolysis. Thus, the C-termini of the proteasomal ATPase may function like a 'key in a lock' to induce gate opening and therefore regulate proteolysis. The polypeptide is Proteasome-associated ATPase (Thermomonospora curvata (strain ATCC 19995 / DSM 43183 / JCM 3096 / KCTC 9072 / NBRC 15933 / NCIMB 10081 / Henssen B9)).